The sequence spans 94 residues: Co-chaperonin GroES (94 aa).

Belongs to the GroES chaperonin family. As to quaternary structure, heptamer of 7 subunits arranged in a ring. Interacts with the chaperonin GroEL.

It is found in the cytoplasm. Its function is as follows. Together with the chaperonin GroEL, plays an essential role in assisting protein folding. The GroEL-GroES system forms a nano-cage that allows encapsulation of the non-native substrate proteins and provides a physical environment optimized to promote and accelerate protein folding. GroES binds to the apical surface of the GroEL ring, thereby capping the opening of the GroEL channel. The sequence is that of Co-chaperonin GroES from Bacillus subtilis (strain 168).